We begin with the raw amino-acid sequence, 157 residues long: 3-dehydroquinate dehydratase (157 aa).

Y29 acts as the Proton acceptor in catalysis. 3 residues coordinate substrate: N80, H86, and D93. The active-site Proton donor is H107. Substrate is bound by residues 108–109 (IS) and R118.

This sequence belongs to the type-II 3-dehydroquinase family. Homododecamer.

The enzyme catalyses 3-dehydroquinate = 3-dehydroshikimate + H2O. The protein operates within metabolic intermediate biosynthesis; chorismate biosynthesis; chorismate from D-erythrose 4-phosphate and phosphoenolpyruvate: step 3/7. Catalyzes a trans-dehydration via an enolate intermediate. This chain is 3-dehydroquinate dehydratase (aroQ), found in Streptomyces coelicolor (strain ATCC BAA-471 / A3(2) / M145).